Reading from the N-terminus, the 365-residue chain is Palmitoyltransferase ZDHHC20 (365 aa).

Residues 1-14 (MAPWTLWRCCQRVV) lie on the Cytoplasmic side of the membrane. The helical transmembrane segment at 15 to 35 (GWVPVLFITFVVVWSYYAYVV) threads the bilayer. Over 36–53 (ELCVFTIFGNEENGKTVV) the chain is Lumenal. Residues 54 to 74 (YLVAFHLFFVMFVWSYWMTIF) form a helical membrane-spanning segment. At 75–169 (TSPASPSKEF…NNCVGFSNYK (95 aa)) the chain is on the cytoplasmic side. Residues 126–176 (RYCEKCQLIKPDRAHHCSACDSCILKMDHHCPWVNNCVGFSNYKFFLLFLL) enclose the DHHC domain. 2 residues coordinate Zn(2+): Cys-128 and Cys-131. Residues Lys-135 and 140-143 (HHCS) contribute to the substrate site. Zn(2+) contacts are provided by His-141, Cys-142, Cys-145, Cys-148, and His-155. The active-site S-palmitoyl cysteine intermediate is Cys-156. Cys-162 contacts Zn(2+). The helical transmembrane segment at 170-190 (FFLLFLLYSLLYCLFVAATVL) threads the bilayer. Residues 191-207 (EYFIKFWTNELTDTRAK) lie on the Lumenal side of the membrane. A helical membrane pass occupies residues 208-231 (FHVLFLFFVSAMFFISVLSLFSYH). The Cytoplasmic segment spans residues 232–365 (CWLVGKNRTT…NNHVTVAIEN (134 aa)). Residues Ser-305, Ser-330, and Ser-339 each carry the phosphoserine modification.

The protein belongs to the DHHC palmitoyltransferase family. In terms of processing, autopalmitoylated (in vitro).

The protein resides in the golgi apparatus membrane. It localises to the cell membrane. It is found in the cytoplasm. The protein localises to the perinuclear region. Its subcellular location is the endoplasmic reticulum membrane. The protein resides in the endoplasmic reticulum-Golgi intermediate compartment membrane. The catalysed reaction is L-cysteinyl-[protein] + hexadecanoyl-CoA = S-hexadecanoyl-L-cysteinyl-[protein] + CoA. The enzyme catalyses L-cysteinyl-[protein] + tetradecanoyl-CoA = S-tetradecanoyl-L-cysteinyl-[protein] + CoA. It catalyses the reaction L-cysteinyl-[protein] + octadecanoyl-CoA = S-octadecanoyl-L-cysteinyl-[protein] + CoA. Its function is as follows. Palmitoyltransferase that could catalyze the addition of palmitate onto various protein substrates. Catalyzes palmitoylation of Cys residues in the cytoplasmic C-terminus of EGFR, and modulates the duration of EGFR signaling by modulating palmitoylation-dependent EGFR internalization and degradation. Has a preference for acyl-CoA with C16 fatty acid chains. Can also utilize acyl-CoA with C14 and C18 fatty acid chains. May palmitoylate CALHM1 subunit of gustatory voltage-gated ion channels and modulate channel gating and kinetics. Functionally, (Microbial infection) Dominant palmitoyltransferase responsible for lipidation of SARS coronavirus-2/SARS-CoV-2 spike protein. Through a sequential action with ZDHHC9, rapidly and efficiently palmitoylates spike protein following its synthesis in the endoplasmic reticulum (ER). In the infected cell, promotes spike biogenesis by protecting it from premature ER degradation, increases half-life and controls the lipid organization of its immediate membrane environment. Once the virus has formed, spike palmitoylation controls fusion with the target cell. This Homo sapiens (Human) protein is Palmitoyltransferase ZDHHC20.